The primary structure comprises 133 residues: UPF0292 protein TON_0187 (133 aa).

Residues 20–100 (EGAIIVEGPR…RVDSETRKEL (81 aa)) form the Toprim domain. Positions 26, 69, and 71 each coordinate Mg(2+).

This sequence belongs to the UPF0292 family. The cofactor is Mg(2+).

This Thermococcus onnurineus (strain NA1) protein is UPF0292 protein TON_0187.